Reading from the N-terminus, the 317-residue chain is Transmembrane and death domain protein 1 (317 aa).

Residues methionine 1–alanine 27 form the signal peptide. Over methionine 28–proline 218 the chain is Extracellular. The segment covering glutamate 62–arginine 73 has biased composition (basic and acidic residues). The tract at residues glutamate 62–valine 106 is disordered. The 85-residue stretch at leucine 66–leucine 150 folds into the Death domain. Residue asparagine 78 is glycosylated (N-linked (GlcNAc...) asparagine). A helical transmembrane segment spans residues leucine 219–leucine 239. Residues leucine 240–leucine 317 are Cytoplasmic-facing.

Its subcellular location is the membrane. This is Transmembrane and death domain protein 1 from Homo sapiens (Human).